Here is a 338-residue protein sequence, read N- to C-terminus: Ankyrin-repeat domain containing transcription coregulator asaA (338 aa).

Over residues 1-10 (MGAPHEEIQA) the composition is skewed to basic and acidic residues. 2 disordered regions span residues 1-70 (MGAP…LRST) and 112-137 (ASSVSPSSSAGPLSSSPSPSQRPFID). Residues 11-33 (LKRRREQNRLAQRRRRDNVRRRL) are compositionally biased toward basic residues. A compositionally biased stretch (polar residues) spans 42–70 (SPASASQTSLCSSTDSRVTLNPHQSLRST). Over residues 112–130 (ASSVSPSSSAGPLSSSPSP) the composition is skewed to low complexity. ANK repeat units lie at residues 235–264 (RWTTALHMAVSQGNFSVMRLLLSYGADPNA), 268–297 (EGATALHVGVMNGNYTMVAELLQRGADPTL), and 301–330 (AGWLPLHQAVHAGDEGCVRVLLEADQPVDY).

The protein operates within secondary metabolite biosynthesis. Functionally, transcription coregulator involved in regulation of gene cluster that mediates the biosynthesis of aspergillic acid, a hydroxamic acid-containing pyrazinone with aliphatic side chains that originates from leucine (Leu) and isoleucine (Ile). Aspergillic acid has antibiotic properties and was shown to be lethal to mice. The polypeptide is Ankyrin-repeat domain containing transcription coregulator asaA (Aspergillus flavus (strain ATCC 200026 / FGSC A1120 / IAM 13836 / NRRL 3357 / JCM 12722 / SRRC 167)).